The following is a 687-amino-acid chain: MSVRYPLLNRELGILGFNERVLAQAADPQVPLLERLRFICITSSNLDEFFEVRMAGLQEQIRDNPGALTPDGMSLQHAYDLVVERAQRLVHRQYTMLHETVLPALEQEGIYFHASDSWNDEQLEWARRYFLDELLPVLTPIGLDPAHPFPRVLNKSLNFVVELEGRDAFGRQAVMGIVQAPRALPRVVRMPHALSGFEHGFVLLSSFMQRFVGELFPQLVVKSCNQFRITRNSELFVDEDEITNLRVALQGELPARHLGNAVRLEVSADTPLHIVRRLLEESELGDKDCYRVAGSVNLVRLMQIPDLVDRPDLKFTPFTASTPAVIANAPTMFDAIDAGDILLHHPYESFQPVLELLQQAARDPSVVAIKQTIYRTGTDSPLMDALMEAARNGKEVTVVVELLARFDEETNINWASQLEAVGAHVVYGVVGHKCHAKMMLIVRRVVQAGKASLRRYVHLGTGNYHPRTARLYTDFGLMTADQKICEDVHHVFQQLTGIGGELTLHELWQSPFTLHPRIIESIRAEIDNAQAGKRARIVAKMNALLEPSVIAALYEASQAGVKVDLIVRGVCALKPGVPGLSENITVRSIVGRFLEHHRIYYFHAGGAEDVYLSSADWMDRNLFRRVEVAFPIRERKLKRRVIAEGLSVCLGDNQSAWQMHSDGHYRRRRTGKTIRNAQLGLLAKFCS.

An ATP-binding site is contributed by asparagine 45. Residues arginine 375 and arginine 405 each coordinate Mg(2+). The active-site Phosphohistidine intermediate is histidine 435. ATP is bound by residues tyrosine 472, arginine 568, and histidine 596.

The protein belongs to the polyphosphate kinase 1 (PPK1) family. It depends on Mg(2+) as a cofactor. An intermediate of this reaction is the autophosphorylated ppk in which a phosphate is covalently linked to a histidine residue through a N-P bond.

The enzyme catalyses [phosphate](n) + ATP = [phosphate](n+1) + ADP. In terms of biological role, catalyzes the reversible transfer of the terminal phosphate of ATP to form a long-chain polyphosphate (polyP). The chain is Polyphosphate kinase from Burkholderia cenocepacia (strain HI2424).